A 642-amino-acid chain; its full sequence is MISDAQKAANAAGAIATGLLSLIIPVPLTTVQWANKHYYLPKESSYTPGRWETLPFQVGIMNCMGNDLIRTVNLIKSARVGYTKMLLGVEAYFIEHKSRNSLLFQPTDSAAEDFMKSHVEPTIRDVPAMLELAPWFGRKHRDNTLTLKRFSSGVGFWCLGGAAAKNYREKSVDVVCYDELSSFEPDVEKEGSPTLLGDKRIEGSVWPKSIRGSTPKIKGSCQIEKAANESAHFMRFYVPCPHCGEEQYLKFGDDASPFGLKWEKNKPESVFYLCEHHGCVIHQSELDQSNGRWICENTGMWTRDGLMFFSARGDEIPPPRSITFHIWTAYSPFTTWVQIVYDWLDALKDPNGLKTFVNTTLGETWEEAVGEKLDHQVLMDKVVRYTAAVPARVVYLTAGIDSQRNRFEMYVWGWAPGEEAFLVDKIIIMGRPDEEETLLRVDAAINKKYRHADGTEMTISRVCWDIGGIDGEIVYQRSKKHGVFRVLPVKGASVYGKPVITMPKTRNQRGVYLCEVGTDTAKEILYARMKADPTPVDEATSYAIRFPDDPEIFSQTEAQQLVAEELVEKWEKGKMRLLWDNKKRRNEALDCLVYAYAALRVSVQRWQLDLAVLAKSREEETTRPTLKELAAKLSGGVNGYSR.

The interval 1 to 48 is interaction with the terminase small subunit; the sequence is MISDAQKAANAAGAIATGLLSLIIPVPLTTVQWANKHYYLPKESSYTP. Residues 42–51 carry the Q motif motif; sequence KESSYTPGRW. The Walker A motif signature appears at 76–83; it reads KSARVGYT. The segment at 166 to 353 is DNA packaging/ATPase; that stretch reads NYREKSVDVV…LDALKDPNGL (188 aa). The short motif at 174-179 is the Walker B motif element; the sequence is VVCYDE. Residue Glu179 is the For ATPase activity of the active site. Asp401 contributes to the Mg(2+) binding site. Residues 401 to 587 are endonuclease; that stretch reads DSQRNRFEMY…LWDNKKRRNE (187 aa). 491–498 serves as a coordination point for ATP; the sequence is GASVYGKP. A basic region spans residues 574–585; the sequence is KMRLLWDNKKRR. The tract at residues 589 to 617 is leucine zipper; it reads LDCLVYAYAALRVSVQRWQLDLAVLAKSR. The tract at residues 611 to 642 is prohead binding; the sequence is AVLAKSREEETTRPTLKELAAKLSGGVNGYSR.

This sequence belongs to the lambdavirus large terminase family. Heterotrimer of two small and one large terminase subunits. The catalytically competent terminase is composed of a tetramer of heterotrimers. The tetramer forms a ring structure large enough to encircle duplex DNA. Host IHFA/IHFB induces bending of viral DNA to facilitate the assembly of the terminase tetramer of heterotrimers. Interacts (via N-terminus) with the terminase small subunit (via C-terminus). Interacts (via C-terminus) with the portal protein; this interaction allows the packaging of viral DNA. Mg(2+) serves as cofactor.

It is found in the host cytoplasm. The catalysed reaction is Endonucleolytic cleavage of DNA to give specific double-stranded fragments with terminal 5'-phosphates.. The terminase large subunit acts as an ATP driven molecular motor necessary for viral DNA translocation into empty capsids and as an endonuclease that cuts the viral genome from the concetamer to initiate and to end the packaging reaction. The terminase lies at a unique vertex of the procapsid and is composed of two subunits, a small terminase subunit involved in viral DNA recognition (binding to packaging sequence cos), and a large terminase subunit possessing endonucleolytic and ATPase activities (DNA maturation and packaging). The terminase binds cooperatively with the host factor IHFA/IHFB to the cos site at the junction of adjacent viral genomes. The endonuclease activity cleaves the viral DNA generating 5'overhangs of 12 bp in length. The strand separation activity separates the cohesive ends generating the single-stranded 'sticky' ends of the mature genome. IHFA/IHFB is also necessary for the strand separation activity of the terminase. The terminase remains bound to the left end of the genome to be packaged, forming a stable DNA-terminase complex. In a reaction facilitated by the viral assembly catalyst gpFI, the DNA-terminase complex binds to the portal of the procapsid thereby activating the translocase activity of the terminase. The terminase packages the viral DNA into the procapsid until the next cos site on the concatemer reaches the complex. The downstream cos site is then cut generating the mature right end of the genome, the heterotrimer undocks from the DNA-filled head and remains bound to the left end of concatemer's next genome. The chain is Terminase, large subunit (2) from Escherichia coli (Bacteriophage 21).